The following is a 693-amino-acid chain: Histone-lysine N-methyltransferase, H3 lysine-9 specific SUVH7 (693 aa).

Disordered stretches follow at residues Trp64–Met99 and Asp111–Glu175. The a.T hook DNA-binding region spans Lys129–Ser141. The 147-residue stretch at Gly227–Arg373 folds into the YDG domain. The Pre-SET domain occupies Gln454–Gly516. The Zn(2+) site is built by Cys458, Cys461, Cys466, Cys471, Cys473, Cys498, Cys502, Cys504, and Cys508. The 142-residue stretch at Leu519–Gly660 folds into the SET domain. Residues Cys529 to Trp531, Asp562, Tyr564, Arg614, and Asn617 to His618 each bind S-adenosyl-L-methionine. Positions 620, 681, 683, and 688 each coordinate Zn(2+). Residues Gly677 to Thr693 form the Post-SET domain.

It belongs to the class V-like SAM-binding methyltransferase superfamily. Histone-lysine methyltransferase family. Suvar3-9 subfamily.

The protein localises to the nucleus. The protein resides in the chromosome. It localises to the centromere. The catalysed reaction is N(6)-methyl-L-lysyl(9)-[histone H3] + S-adenosyl-L-methionine = N(6),N(6)-dimethyl-L-lysyl(9)-[histone H3] + S-adenosyl-L-homocysteine + H(+). It catalyses the reaction L-lysyl(9)-[histone H3] + S-adenosyl-L-methionine = N(6)-methyl-L-lysyl(9)-[histone H3] + S-adenosyl-L-homocysteine + H(+). In terms of biological role, histone methyltransferase. Methylates 'Lys-9' of histone H3. H3 'Lys-9' methylation represents a specific tag for epigenetic transcriptional repression. The chain is Histone-lysine N-methyltransferase, H3 lysine-9 specific SUVH7 (SUVH7) from Arabidopsis thaliana (Mouse-ear cress).